The sequence spans 399 residues: Myb-related transcription factor, partner of profilin (399 aa).

One can recognise a Myb-like domain in the interval 12–84 (TTRLRKPRFS…EVQKRWNDFK (73 aa)). A Nuclear localization signal motif is present at residues 83 to 86 (FKRR). 4 disordered regions span residues 87-108 (TKEK…AEDA), 127-261 (PGAG…PSLD), 297-332 (LLPG…PKVE), and 358-399 (APRS…WKSP). Over residues 127–136 (PGAGAGAEEP) the composition is skewed to low complexity. A compositionally biased stretch (pro residues) spans 137-149 (PAAPSSQPPPPSA). A compositionally biased stretch (basic and acidic residues) spans 156–170 (LSEDRREDRRADTSA). Composition is skewed to pro residues over residues 219–252 (SPPP…PPPT), 305–329 (SLPP…PPAP), and 366–377 (PRPPPAPLPPHD). Residues 381–399 (HKRRKGFPTRKRRGRWKSP) show a composition bias toward basic residues. 2 consecutive short sequence motifs (nuclear localization signal) follow at residues 382 to 385 (KRRK) and 390 to 393 (RKRR).

Interacts with PFN1. Homodimer and heterodimer with PFN1.

The protein resides in the nucleus. Its function is as follows. Transcriptional repressor; DNA-binding protein that specifically recognizes the core sequence 5'-YAAC[GT]G-3'. Dimerization with PFN1 reduces its DNA-binding capacity. The protein is Myb-related transcription factor, partner of profilin (MYPOP) of Homo sapiens (Human).